Reading from the N-terminus, the 391-residue chain is Tumor susceptibility gene 101 protein (391 aa).

The residue at position 2 (alanine 2) is an N-acetylalanine. A UEV domain is found at 2–145 (AVSESQLKKM…GEEPPVFSRP (144 aa)). The interaction with CEP55 stretch occupies residues 159–163 (PPNTS). The segment at 197 to 220 (YPATTSSQYPSQPPVTTVGPSRDG) is disordered. Positions 200–215 (TTSSQYPSQPPVTTVG) are enriched in polar residues. The residue at position 221 (threonine 221) is a Phosphothreonine. Residues 237–317 (DKLRWRMKEE…NQSENNDIDE (81 aa)) are a coiled coil. Positions 321–324 (PTAP) match the PTAP/PSAP motif motif. The SB domain maps to 323 to 391 (APLYKQILNL…RKTAGLSDLY (69 aa)).

It belongs to the ubiquitin-conjugating enzyme family. UEV subfamily. As to quaternary structure, component of the ESCRT-I complex (endosomal sorting complex required for transport I) which consists of TSG101, VPS28, a VPS37 protein (VPS37A to -D) and MVB12A or MVB12B in a 1:1:1:1 stoichiometry. Interacts with VPS37A, VPS37B and VPS37C. Component of an ESCRT-I complex (endosomal sorting complex required for transport I) which consists of TSG101, VPS28, VPS37A and UBAP1 in a 1:1:1:1 stoichiometry. Interacts with DMAP1. Interacts with GMCL. Interacts with ubiquitin, stathmin and AATF. Interacts with HGS; the interaction mediates the association with the ESCRT-0 complex. Interacts with GGA1 and GGA3. Interacts (via UEV domain) with PDCD6IP/AIP1. Interacts with VPS28, SNF8 and VPS36. Self-associates. Interacts with MVB12A; the association appears to be mediated by the TSG101-VPS37 binary subcomplex. Interacts with VPS37D. Interacts with LRSAM1. Interacts with CEP55; the interaction is required for cytokinesis. Interacts with PDCD6. Interacts with LITAF. Interacts with murine leukemia virus Gag polyprotein (via PSAP motif). Interacts with MGRN1. Interacts with ARRDC1; recruits TSG101 to the plasma membrane. Post-translationally, monoubiquitinated at multiple sites by LRSAM1 and by MGRN1. Ubiquitination inactivates it, possibly by regulating its shuttling between an active membrane-bound protein and an inactive soluble form. Ubiquitination by MGRN1 requires the presence of UBE2D1. In terms of tissue distribution, ubiquitous. Higher expression in brain and mammary gland. Lower expression in liver and tumoral tissues.

It localises to the cytoplasm. Its subcellular location is the early endosome membrane. The protein resides in the late endosome membrane. It is found in the cytoskeleton. The protein localises to the microtubule organizing center. It localises to the centrosome. Its subcellular location is the midbody. The protein resides in the midbody ring. It is found in the nucleus. Its function is as follows. Component of the ESCRT-I complex, a regulator of vesicular trafficking process. Binds to ubiquitinated cargo proteins and is required for the sorting of endocytic ubiquitinated cargos into multivesicular bodies (MVBs). Mediates the association between the ESCRT-0 and ESCRT-I complex. Required for completion of cytokinesis; the function requires CEP55. May be involved in cell growth and differentiation. Acts as a negative growth regulator. Required for the exosomal release of SDCBP, CD63 and syndecan. It may also play a role in the extracellular release of microvesicles that differ from the exosomes. The chain is Tumor susceptibility gene 101 protein (Tsg101) from Mus musculus (Mouse).